Reading from the N-terminus, the 323-residue chain is SPbeta prophage-derived uncharacterized protein YorG (323 aa).

The stretch at 222 to 272 forms a coiled coil; sequence TAENLEKAIIEAVERQEQAEGIVAVTYEEQKQNNASEELDFNSLMDQIKEI.

This chain is SPbeta prophage-derived uncharacterized protein YorG (yorG), found in Bacillus subtilis (strain 168).